The sequence spans 312 residues: Aspartate carbamoyltransferase catalytic subunit (312 aa).

2 residues coordinate carbamoyl phosphate: R58 and T59. Residue K86 participates in L-aspartate binding. Carbamoyl phosphate contacts are provided by R108, H136, and Q139. L-aspartate contacts are provided by R169 and R223. Residues G264 and P265 each contribute to the carbamoyl phosphate site.

The protein belongs to the aspartate/ornithine carbamoyltransferase superfamily. ATCase family. In terms of assembly, heterododecamer (2C3:3R2) of six catalytic PyrB chains organized as two trimers (C3), and six regulatory PyrI chains organized as three dimers (R2).

The enzyme catalyses carbamoyl phosphate + L-aspartate = N-carbamoyl-L-aspartate + phosphate + H(+). It functions in the pathway pyrimidine metabolism; UMP biosynthesis via de novo pathway; (S)-dihydroorotate from bicarbonate: step 2/3. Functionally, catalyzes the condensation of carbamoyl phosphate and aspartate to form carbamoyl aspartate and inorganic phosphate, the committed step in the de novo pyrimidine nucleotide biosynthesis pathway. The chain is Aspartate carbamoyltransferase catalytic subunit from Desulforamulus reducens (strain ATCC BAA-1160 / DSM 100696 / MI-1) (Desulfotomaculum reducens).